Consider the following 236-residue polypeptide: Small ribosomal subunit protein uS2c (236 aa).

Component of the chloroplast small ribosomal subunit (SSU). Mature 70S chloroplast ribosomes of higher plants consist of a small (30S) and a large (50S) subunit. The 30S small subunit contains 1 molecule of ribosomal RNA (16S rRNA) and 24 different proteins. The 50S large subunit contains 3 rRNA molecules (23S, 5S and 4.5S rRNA) and 33 different proteins.

It is found in the plastid. The protein resides in the chloroplast. Functionally, component of the chloroplast ribosome (chloro-ribosome), a dedicated translation machinery responsible for the synthesis of chloroplast genome-encoded proteins, including proteins of the transcription and translation machinery and components of the photosynthetic apparatus. The protein is Small ribosomal subunit protein uS2c (rps2) of Spinacia oleracea (Spinach).